An 88-amino-acid polypeptide reads, in one-letter code: Large ribosomal subunit protein uL29 (88 aa).

This sequence belongs to the universal ribosomal protein uL29 family.

The protein is Large ribosomal subunit protein uL29 (rpl29) of Sulfurisphaera tokodaii (strain DSM 16993 / JCM 10545 / NBRC 100140 / 7) (Sulfolobus tokodaii).